The chain runs to 986 residues: MFMSAKSPLLLLVDGHSLAFRAYYAFGLSKKGPLRTTAGIPTSVCFGFLNSLMQVMESQKPAAIAIAFDRREPTFRHEADGAYKSNRQETPEDFAEDLSYLQQLLEALNLQTITYAGYEADDILGTLACQGSDAGYQVKILSGDRDLFQLVSPEKNISVLYLTRNPFSSNTGYDELDWQGVVDKMGVTPAQIVDFKALCGDKSDCIPGINGIGEKTAIKLLAEYETLEKVYENLAQIKGALKTRLDNGKDDAMHSQMLARIVVDVPLPVTWEDLQLTGFSTDRLVPLLEKLELRTFIDKIQAFHRNFSDNQSPVPMGNEADNGEPKKTVKAKKSKEKVNPDDSQQLSLFDGVPVVNQEDGLITIQLPKQIQPQIITTIAQLEALVEELKKHTDADFPVAWDTETDSLDPLVANLVGIGCAWGQEPNQVAYIPLKHHQGEQLSLGIIKDLLGEILGNAIYPKVLQNAKFDRRVLAHHGIELGGVVLDTMLASYVLQPEETHNLTDLCRRYNLGLVALSYKDLGLKKDQTIADLPLETAGQYCGLDCYATYLLASKLQKELDQYPELKEILKEIEQPLEKILAAMEDRGIRIDCDYLQTLSQQLAENLLTIETAAYEAAGESFNLSSPKQLGTILFDKLGLDRKKSRKTKTGYSTDHATLEKLQGDHPIIDAILEHRTLAKLKSTYVDALPELVNGQTQRIHTDFNQAVTSTGRLSSSNPNLQNIPIRSDFSRQIRRAFLPQKDWLLVSADYSQIELRILAHLSQEPVLLQAYGDRQDVHGVTAKLLFGKEDITPAERNLGKTINFGVIYGMGAQRFARETGISAVEGREFIDRYHRTYAQVFDYLETMKLEAIAKGYVTTIVGRRRYFNFVTEALRQLRGKTVTELDLVDVKMNYNDAQLLRSAANAPIQGSSADIIKIAMVKLAKLLESYQTRMLLQVHDELIFEMPPEEWEELAPLIQNTMEQALTLSVPLVVEMHRGSNWMEAK.

Positions 1 to 303 (MFMSAKSPLL…RTFIDKIQAF (303 aa)) constitute a 5'-3' exonuclease domain. One can recognise a 3'-5' exonuclease domain in the interval 304 to 592 (HRNFSDNQSP…MEDRGIRIDC (289 aa)). Residues 308–327 (SDNQSPVPMGNEADNGEPKK) form a disordered region. Residues 593–986 (DYLQTLSQQL…HRGSNWMEAK (394 aa)) are polymerase.

It belongs to the DNA polymerase type-A family. In terms of assembly, single-chain monomer with multiple functions.

The enzyme catalyses DNA(n) + a 2'-deoxyribonucleoside 5'-triphosphate = DNA(n+1) + diphosphate. In addition to polymerase activity, this DNA polymerase exhibits 3'-5' and 5'-3' exonuclease activity. The protein is DNA polymerase I (polA) of Synechocystis sp. (strain ATCC 27184 / PCC 6803 / Kazusa).